Reading from the N-terminus, the 311-residue chain is Malate dehydrogenase (311 aa).

NAD(+) is bound by residues 7-13 (GAAGGIG) and D34. R81 and R87 together coordinate substrate. Residues N94 and 117–119 (ITN) each bind NAD(+). Residues N119 and R153 each contribute to the substrate site. Residue H177 is the Proton acceptor of the active site. M227 contributes to the NAD(+) binding site.

This sequence belongs to the LDH/MDH superfamily. MDH type 1 family. In terms of assembly, homodimer.

The enzyme catalyses (S)-malate + NAD(+) = oxaloacetate + NADH + H(+). Catalyzes the reversible oxidation of malate to oxaloacetate. This is Malate dehydrogenase from Aliivibrio fischeri (strain MJ11) (Vibrio fischeri).